We begin with the raw amino-acid sequence, 62 residues long: Disintegrin atropoimin (62 aa).

A Disintegrin domain is found at 1–62 (EAGEECDCGT…ADCPRNGLYG (62 aa)). 5 disulfides stabilise this stretch: cysteine 6-cysteine 21, cysteine 8-cysteine 16, cysteine 15-cysteine 38, cysteine 29-cysteine 35, and cysteine 34-cysteine 48. A Cell attachment site motif is present at residues 41–42 (GD).

Belongs to the venom metalloproteinase (M12B) family. P-II subfamily. P-IIa sub-subfamily. As to quaternary structure, monomer. Expressed by the venom gland.

The protein localises to the secreted. In terms of biological role, inhibits ADP- (IC(50)=63 nM) and collagen-induced (IC(50)=53 nM) aggregation of human platelets. In vitro, inhibits adhesion of endothelial cells to vitronectin, type-I collagen and, to a lower degree, fibronectin and laminin. The chain is Disintegrin atropoimin from Metlapilcoatlus mexicanus (Central American jumping pitviper).